The sequence spans 214 residues: Phosphatidylcholine transfer protein (214 aa).

The residue at position 1 (M1) is an N-acetylmethionine. The region spanning 1 to 212 (MELAAGSFSE…MARACQNYLK (212 aa)) is the START domain. Residues Y72 and R78 each coordinate a 1,2-diacyl-sn-glycero-3-phosphocholine. S139 is modified (phosphoserine). Q157 contributes to the a 1,2-diacyl-sn-glycero-3-phosphocholine binding site.

Interacts with ACOT13/THEM2. Highest expression in liver, placenta, testis, kidney and heart. Low levels in brain and lung. No expression detected in thymus.

It is found in the cytoplasm. Its function is as follows. Catalyzes the transfer of phosphatidylcholine between membranes. Binds a single lipid molecule. In Homo sapiens (Human), this protein is Phosphatidylcholine transfer protein (PCTP).